A 271-amino-acid chain; its full sequence is 4-hydroxy-tetrahydrodipicolinate reductase (271 aa).

NAD(+) is bound by residues 11–16 (GAAGRM), Glu-37, 102–104 (GTT), and 126–129 (AGNM). The active-site Proton donor/acceptor is the His-159. His-160 lines the (S)-2,3,4,5-tetrahydrodipicolinate pocket. Lys-163 functions as the Proton donor in the catalytic mechanism. (S)-2,3,4,5-tetrahydrodipicolinate is bound at residue 169–170 (GT).

It belongs to the DapB family.

The protein resides in the cytoplasm. It catalyses the reaction (S)-2,3,4,5-tetrahydrodipicolinate + NAD(+) + H2O = (2S,4S)-4-hydroxy-2,3,4,5-tetrahydrodipicolinate + NADH + H(+). The enzyme catalyses (S)-2,3,4,5-tetrahydrodipicolinate + NADP(+) + H2O = (2S,4S)-4-hydroxy-2,3,4,5-tetrahydrodipicolinate + NADPH + H(+). It functions in the pathway amino-acid biosynthesis; L-lysine biosynthesis via DAP pathway; (S)-tetrahydrodipicolinate from L-aspartate: step 4/4. Catalyzes the conversion of 4-hydroxy-tetrahydrodipicolinate (HTPA) to tetrahydrodipicolinate. The protein is 4-hydroxy-tetrahydrodipicolinate reductase of Parvibaculum lavamentivorans (strain DS-1 / DSM 13023 / NCIMB 13966).